A 103-amino-acid polypeptide reads, in one-letter code: Leukocyte cysteine proteinase inhibitor 1 (103 aa).

A Blocked amino end (Met); partial modification is found at Met1. A disordered region spans residues 1–20; the sequence is MESEEMLAGGLTEPRPATPE. Positions 51 to 55 match the Secondary area of contact motif; that stretch reads QVVAG.

This sequence belongs to the cystatin family.

The protein resides in the cytoplasm. Potent inhibitor of cathepsins L and S, and papain. This chain is Leukocyte cysteine proteinase inhibitor 1, found in Sus scrofa (Pig).